We begin with the raw amino-acid sequence, 511 residues long: Ulvan-active sulfatase (511 aa).

The signal sequence occupies residues 1-34 (MNFKQNIVYKKMAISMKITAIRPIALVISFTLLS). The N-palmitoyl cysteine moiety is linked to residue C35. The S-diacylglycerol cysteine moiety is linked to residue C35. Positions 59 and 99 each coordinate Ca(2+). C99 serves as the catalytic Nucleophile. C99 carries the post-translational modification 3-oxoalanine (Cys). Residue H149 is part of the active site. Position 305 (D305) interacts with Ca(2+).

This sequence belongs to the sulfatase family. Requires Ca(2+) as cofactor. Post-translationally, the conversion to 3-oxoalanine (also known as C-formylglycine, FGly), of a serine or cysteine residue in prokaryotes and of a cysteine residue in eukaryotes, is critical for catalytic activity. This post-translational modification is severely defective in multiple sulfatase deficiency (MSD).

The protein localises to the cell membrane. Functionally, sulfatase involved in ulvan degradation. Ulvan is the main polysaccharide component of the Ulvales (green seaweed) cell wall. It is composed of disaccharide building blocks comprising 3-sulfated rhamnose (Rha3S) linked to D-glucuronic acid (GlcA), L-iduronic acid (IduA), or D-xylose (Xyl). The protein is Ulvan-active sulfatase of Formosa agariphila (strain DSM 15362 / KCTC 12365 / LMG 23005 / KMM 3901 / M-2Alg 35-1).